The primary structure comprises 1252 residues: DNA-directed RNA polymerase subunit beta (1252 aa).

It belongs to the RNA polymerase beta chain family. The RNAP catalytic core consists of 2 alpha, 1 beta, 1 beta' and 1 omega subunit. When a sigma factor is associated with the core the holoenzyme is formed, which can initiate transcription.

It catalyses the reaction RNA(n) + a ribonucleoside 5'-triphosphate = RNA(n+1) + diphosphate. Functionally, DNA-dependent RNA polymerase catalyzes the transcription of DNA into RNA using the four ribonucleoside triphosphates as substrates. The chain is DNA-directed RNA polymerase subunit beta from Chlamydia pneumoniae (Chlamydophila pneumoniae).